The primary structure comprises 67 residues: Putative cytosolic sulfotransferase 2 (67 aa).

A 3'-phosphoadenylyl sulfate-binding site is contributed by 31-33; it reads RDG.

This sequence belongs to the sulfotransferase 1 family.

The protein resides in the cytoplasm. Its function is as follows. Sulfotransferase that utilizes 3'-phospho-5'-adenylyl sulfate (PAPS) as sulfonate donor. The protein is Putative cytosolic sulfotransferase 2 (SOT2) of Arabidopsis thaliana (Mouse-ear cress).